Here is a 401-residue protein sequence, read N- to C-terminus: Protein nanos (401 aa).

Residues 181–207 form a disordered region; it reads LGRMSYGSAPPQVQMPPQQQHQQQQGL. A compositionally biased stretch (low complexity) spans 190 to 205; the sequence is PPQVQMPPQQQHQQQQ. Residues 318–372 form a Nanos-type zinc finger; the sequence is HCVFCENNNEPEAVINSHSVRDNFNRVLCPKLRTYVCPICGASGDSAHTIKYCPK. The Zn(2+) site is built by cysteine 319, cysteine 322, histidine 335, cysteine 346, cysteine 354, cysteine 357, histidine 365, and cysteine 370. 2 consecutive short sequence motifs (C2HC) follow at residues 319–346 and 354–370; these read CVFCENNNEPEAVINSHSVRDNFNRVLC and CPICGASGDSAHTIKYC.

The protein belongs to the nanos family. In terms of assembly, interacts with pum and brat. Interacts with cup. Interacts with mei-P26; possibly involved in regulation of brat levels. Interacts with wh; may be involved in mei-P26-dependent derepression of the BMP signaling pathway. Acts via the formation of a quaternary complex composed of pum, nanos, brat and the 3'-UTR mRNA of hb. Binds RNA with no specificity. As to expression, posterior part of the embryo. While the transcript is present throughout the embryo, nanos translation is controlled by smg, and the protein is found in pole plasm and pole cells. In the female ovary expressed in germline stem cells, precystoblasts and in maturing cystoblasts; in early cystoblasts expression is post-transcriptionally repressed by bam in a 3'UTR-dependent manner.

The protein localises to the cytoplasm. The protein resides in the cytoplasmic ribonucleoprotein granule. Maternal RNA-binding protein that is required for germ cells proliferation and self-renewal. Acts by forming a complex with pum and brat that regulates translation and mRNA stability. The complex binds to the Nanos Response Element (NRE), a 16 bp sequence in the hb mRNA 3'-UTR and prevents its translation. Controls posterior development. Rescuing factor for the abdominal defect of posterior group mutants. The other posterior group genes are not required for nanos function but rather play a role in localization or distribution of nanos protein. The protein is Protein nanos of Drosophila melanogaster (Fruit fly).